A 31-amino-acid chain; its full sequence is Cytochrome b6-f complex subunit 6 (31 aa).

The chain crosses the membrane as a helical span at residues 4-26; sequence LTSYFGFLLAALTITSALFIGLN.

It belongs to the PetL family. As to quaternary structure, the 4 large subunits of the cytochrome b6-f complex are cytochrome b6, subunit IV (17 kDa polypeptide, PetD), cytochrome f and the Rieske protein, while the 4 small subunits are PetG, PetL, PetM and PetN. The complex functions as a dimer.

It is found in the plastid. It localises to the chloroplast thylakoid membrane. Its function is as follows. Component of the cytochrome b6-f complex, which mediates electron transfer between photosystem II (PSII) and photosystem I (PSI), cyclic electron flow around PSI, and state transitions. PetL is important for photoautotrophic growth as well as for electron transfer efficiency and stability of the cytochrome b6-f complex. This Blitum bonus-henricus (Good King Henry) protein is Cytochrome b6-f complex subunit 6.